The following is a 350-amino-acid chain: Ookinete surface protein PIMMS43 (350 aa).

A signal peptide spans 1–24 (MIKLCTFLSLFLIFFFLNLNAING). Residues 330 to 350 (NSIASKLMSVFVFIAVIIYIL) traverse the membrane as a helical segment.

In terms of assembly, forms multimers, perhaps with an unknown protein(s).

The protein localises to the membrane. Functionally, involved in ookinete evasion of the mosquito complement-like response, oocyst maturation, sporozoite development and infectivity. The polypeptide is Ookinete surface protein PIMMS43 (Plasmodium berghei (strain Anka)).